Consider the following 224-residue polypeptide: N-terminal Xaa-Pro-Lys N-methyltransferase 1 (224 aa).

S-adenosyl-L-methionine is bound by residues Gly70, Arg75, 92–94, 120–121, and Gln136; these read DVT and LQ.

Belongs to the methyltransferase superfamily. NTM1 family.

It is found in the nucleus. The enzyme catalyses N-terminal L-alanyl-L-prolyl-L-lysyl-[protein] + 3 S-adenosyl-L-methionine = N-terminal N,N,N-trimethyl-L-alanyl-L-prolyl-L-lysyl-[protein] + 3 S-adenosyl-L-homocysteine + 3 H(+). It carries out the reaction N-terminal L-seryl-L-prolyl-L-lysyl-[protein] + 3 S-adenosyl-L-methionine = N-terminal N,N,N-trimethyl-L-seryl-L-prolyl-L-lysyl-[protein] + 3 S-adenosyl-L-homocysteine + 3 H(+). It catalyses the reaction N-terminal L-prolyl-L-prolyl-L-lysyl-[protein] + 2 S-adenosyl-L-methionine = N-terminal N,N-dimethyl-L-prolyl-L-prolyl-L-lysyl-[protein] + 2 S-adenosyl-L-homocysteine + 2 H(+). Distributive alpha-N-methyltransferase that methylates the N-terminus of target proteins containing the N-terminal motif [Ala/Gly/Pro/Ser]-Pro-Lys when the initiator Met is cleaved. Specifically catalyzes mono-, di- or tri-methylation of the exposed alpha-amino group of the Ala, Gly or Ser residue in the [Ala/Gly/Ser]-Pro-Lys motif and mono- or di-methylation of Pro in the Pro-Pro-Lys motif. Required during mitosis for normal bipolar spindle formation and chromosome segregation via its action on target proteins. This chain is N-terminal Xaa-Pro-Lys N-methyltransferase 1 (ntmt1), found in Xenopus tropicalis (Western clawed frog).